Reading from the N-terminus, the 179-residue chain is ADP-ribosylation factor-like protein 5A (179 aa).

The N-myristoyl glycine moiety is linked to residue Gly2. GTP contacts are provided by residues 23-30, 66-70, 125-128, and Ala159; these read GLDNAGKT, DIGGQ, and NKQD.

The protein belongs to the small GTPase superfamily. Arf family.

Its function is as follows. Lacks ADP-ribosylation enhancing activity. This chain is ADP-ribosylation factor-like protein 5A (ARL5A), found in Homo sapiens (Human).